Consider the following 734-residue polypeptide: MALRFPRFSQGLAQDPTTRRIWFGIATAHDFESHDDITEERLYQNIFASHFGQLAIIFLWTSGNLFHVAWQGNFETWVQDPLHVRPIAHAIWDPHFGQPAVEAFTRGGALGPVNIAYSGVYQWWYTIGLRTNEDLYTGALFLLFLSALSLIGGWLHLQPKWKPRVSWFKNAESRLNHHLSGLFGVSSLAWTGHLVHVAIPASRGENVRWNNFLNVLPHPQGLGPLFTGQWSLYAQNPDSSSHLFGTSQGSGTAILTLLGGFHPQTQSLWLTDMAHHHLAIAILFLIAGHMYRTNFGIGHSIKDLLEAHIPPGGRLGRGHKGLYDTINNSIHFQLGLALASLGVITSLVAQHMYSLPAYAFIAQDFTTQAALYTHHQYIAGFIMTGAFAHGAIFFIRDYNPEQNEDNVLARMLDHKEAIISHLSWASLFLGFHTLGLYVHNDVMLAFGTPEKQILIEPIFAQWIQSAHGKTSYGFDVLLSSTSGPAFNAGRSIWLPGWLNAINESSNSLFLTIGPGDFLVHHAIALGLHTTTLILVKGALDARGSKLMPDKKDFGYSFPCDGPGRGGTCDISAWDAFYLAVFWMLNTIGWVTFYWHWKHITLWQGNVSQFNESSTYLMGWLRDYLWLNSSQLINGYNPFGMNSLSVWAWMFLFGHLVWATGFMFLISWRGYWQELIETLAWAHERTPLANLIRWKDKPVALSIVQARLVGLAHFSVGYIFTYAAFLIASTSGKFG.

The next 8 membrane-spanning stretches (helical) occupy residues 46–69, 135–158, 175–199, 273–291, 330–353, 369–395, 417–439, and 517–535; these read IFAS…FHVA, LYTG…LHLQ, LNHH…HVAI, MAHH…GHMY, IHFQ…QHMY, AALY…IFFI, AIIS…LYVH, and FLVH…LILV. Residues C559 and C568 each coordinate [4Fe-4S] cluster. Transmembrane regions (helical) follow at residues 575–596 and 643–665; these read AFYL…YWHW and LSVW…MFLI. Residues H654, M662, and Y670 each coordinate chlorophyll a. W671 is a binding site for phylloquinone. A helical membrane pass occupies residues 707–727; sequence LVGLAHFSVGYIFTYAAFLIA.

This sequence belongs to the PsaA/PsaB family. In terms of assembly, the PsaA/B heterodimer binds the P700 chlorophyll special pair and subsequent electron acceptors. PSI consists of a core antenna complex that captures photons, and an electron transfer chain that converts photonic excitation into a charge separation. The eukaryotic PSI reaction center is composed of at least 11 subunits. The cofactor is P700 is a chlorophyll a/chlorophyll a' dimer, A0 is one or more chlorophyll a, A1 is one or both phylloquinones and FX is a shared 4Fe-4S iron-sulfur center..

It is found in the plastid. The protein localises to the chloroplast thylakoid membrane. It catalyses the reaction reduced [plastocyanin] + hnu + oxidized [2Fe-2S]-[ferredoxin] = oxidized [plastocyanin] + reduced [2Fe-2S]-[ferredoxin]. PsaA and PsaB bind P700, the primary electron donor of photosystem I (PSI), as well as the electron acceptors A0, A1 and FX. PSI is a plastocyanin-ferredoxin oxidoreductase, converting photonic excitation into a charge separation, which transfers an electron from the donor P700 chlorophyll pair to the spectroscopically characterized acceptors A0, A1, FX, FA and FB in turn. Oxidized P700 is reduced on the lumenal side of the thylakoid membrane by plastocyanin. The chain is Photosystem I P700 chlorophyll a apoprotein A2 from Capsella bursa-pastoris (Shepherd's purse).